The primary structure comprises 497 residues: Probable sensor kinase SilS (497 aa).

Topologically, residues 1–15 are cytoplasmic; sequence MHSKPSRLPFSLALR. The chain crosses the membrane as a helical span at residues 16 to 36; the sequence is LTFFISLSTILAFIAFTWFML. Residues 37–186 are Periplasmic-facing; it reads HSVEKHFAEQ…HLHYLDALKK (150 aa). Residues 187–207 form a helical membrane-spanning segment; sequence NLIAIAVVISLLIVLIIRIAV. Residues 208-261 enclose the HAMP domain; the sequence is RQGHLPLRNVSNAIKNITSENLDARLEPTRVPIELEQLVISFNHMIGKIEDVFT. The Cytoplasmic segment spans residues 208 to 497; the sequence is RQGHLPLRNV…KMIPDTQCWE (290 aa). In terms of domain architecture, Histidine kinase spans 269–487; it reads DIAHEIRTPI…RFILSVPRLE (219 aa). At H272 the chain carries Phosphohistidine; by autocatalysis.

The protein localises to the cell inner membrane. The enzyme catalyses ATP + protein L-histidine = ADP + protein N-phospho-L-histidine.. Its function is as follows. Component of the sil cation-efflux system that confers resistance to silver. Probable member of a two-component regulatory system SilS/SilR. May activate SilR by phosphorylation. This Salmonella typhimurium protein is Probable sensor kinase SilS (silS).